A 620-amino-acid chain; its full sequence is Schwann cell myelin protein (620 aa).

Residues 1–17 (MELLVLTVLLMGTGCIS) form the signal peptide. Residues 18 to 516 (APWAAWMPPK…GGLVWAKVGP (499 aa)) lie on the Extracellular side of the membrane. One can recognise an Ig-like V-type domain in the interval 28–106 (MAALSGTCVQ…RDCTLNIARL (79 aa)). 3 disulfides stabilise this stretch: cysteine 35–cysteine 164, cysteine 40–cysteine 99, and cysteine 158–cysteine 216. Arginine 117 provides a ligand contact to N-acetylneuraminate. Ig-like C2-type domains follow at residues 151–233 (GSEA…DVGL), 239–322 (PQVV…LRVA), 325–407 (PRAP…FNIS), and 414–495 (VLPA…NRHG). Residue asparagine 222 is glycosylated (N-linked (GlcNAc...) asparagine). Residues cysteine 260 and cysteine 304 are joined by a disulfide bond. N-linked (GlcNAc...) asparagine glycans are attached at residues asparagine 314 and asparagine 331. Cysteine 346 and cysteine 391 are joined by a disulfide. An N-linked (GlcNAc...) asparagine glycan is attached at asparagine 405. Intrachain disulfides connect cysteine 420/cysteine 429 and cysteine 431/cysteine 488. Residue asparagine 449 is glycosylated (N-linked (GlcNAc...) asparagine). The helical transmembrane segment at 517–536 (VGAVVAFAIVIAVVCYLSQS) threads the bilayer. Residues 537–620 (RRKKGAGSPE…PPEYAEIRVK (84 aa)) lie on the Cytoplasmic side of the membrane. Disordered regions lie at residues 539–562 (KKGAGSPEVTPVQPMAGPGGDPDL) and 583–620 (VKEGSGAPQEVTPTSHPPMKPTRGPLEDPPEYAEIRVK).

It belongs to the immunoglobulin superfamily. SIGLEC (sialic acid binding Ig-like lectin) family. In terms of tissue distribution, exclusively expressed by myelinating and nonmyelinating Schwann cells and oligodendrocytes.

The protein localises to the membrane. The polypeptide is Schwann cell myelin protein (SMP) (Coturnix japonica (Japanese quail)).